The sequence spans 193 residues: Thymidine kinase (193 aa).

Residues 9 to 16 (SAMNAGKS) and 87 to 90 (DEAQ) contribute to the ATP site. The active-site Proton acceptor is the E88. Zn(2+)-binding residues include C145, C147, C182, and H185.

Belongs to the thymidine kinase family. In terms of assembly, homotetramer.

The protein resides in the cytoplasm. The catalysed reaction is thymidine + ATP = dTMP + ADP + H(+). The sequence is that of Thymidine kinase from Idiomarina loihiensis (strain ATCC BAA-735 / DSM 15497 / L2-TR).